Reading from the N-terminus, the 472-residue chain is Levansucrase (472 aa).

Positions 1-29 (MNIKKIVKQATVLTFTTALLAGGATQAFA) are cleaved as a signal peptide. Sucrose-binding residues include Trp-85, Asp-86, and Ser-164. Residue Asp-86 is the Nucleophile of the active site. Asp-241 contacts Ca(2+). Residues Arg-246 and Asp-247 each coordinate sucrose. Ca(2+) contacts are provided by Gln-272, Leu-308, Asn-310, and Asp-339. Glu-340 serves as a coordination point for sucrose. Residue Glu-342 is the Proton donor/acceptor of the active site. Arg-360 provides a ligand contact to sucrose.

The protein belongs to the glycosyl hydrolase 68 family.

The protein localises to the secreted. It catalyses the reaction [6)-beta-D-fructofuranosyl-(2-&gt;](n) alpha-D-glucopyranoside + sucrose = [6)-beta-D-fructofuranosyl-(2-&gt;](n+1) alpha-D-glucopyranoside + D-glucose. Ca(2+) may play an important structural role and promote stability of levansucrase. Catalyzes the synthesis of levan, a fructose polymer, by transferring the fructosyl moiety from sucrose to a growing acceptor molecule. Also displays sucrose hydrolase activity. The sequence is that of Levansucrase from Bacillus amyloliquefaciens (Bacillus velezensis).